The following is a 198-amino-acid chain: Recombination protein RecR (198 aa).

The segment at 56 to 71 (CKVCGNFSEEDECVIC) adopts a C4-type zinc-finger fold. A Toprim domain is found at 79–174 (GVICVVEEPK…RVSKLASGLP (96 aa)).

Belongs to the RecR family.

In terms of biological role, may play a role in DNA repair. It seems to be involved in an RecBC-independent recombinational process of DNA repair. It may act with RecF and RecO. The polypeptide is Recombination protein RecR (Tropheryma whipplei (strain TW08/27) (Whipple's bacillus)).